Reading from the N-terminus, the 154-residue chain is Myoglobin (154 aa).

The 147-residue stretch at 2-148 folds into the Globin domain; that stretch reads GLSDGEWQLV…FRNDIAAKYK (147 aa). Phosphoserine is present on serine 4. Histidine 65 contacts nitrite. Histidine 65 provides a ligand contact to O2. Threonine 68 bears the Phosphothreonine mark. Histidine 94 contacts heme b.

Belongs to the globin family. As to quaternary structure, monomeric.

Its subcellular location is the cytoplasm. It is found in the sarcoplasm. The catalysed reaction is Fe(III)-heme b-[protein] + nitric oxide + H2O = Fe(II)-heme b-[protein] + nitrite + 2 H(+). It catalyses the reaction H2O2 + AH2 = A + 2 H2O. In terms of biological role, monomeric heme protein which primary function is to store oxygen and facilitate its diffusion within muscle tissues. Reversibly binds oxygen through a pentacoordinated heme iron and enables its timely and efficient release as needed during periods of heightened demand. Depending on the oxidative conditions of tissues and cells, and in addition to its ability to bind oxygen, it also has a nitrite reductase activity whereby it regulates the production of bioactive nitric oxide. Under stress conditions, like hypoxia and anoxia, it also protects cells against reactive oxygen species thanks to its pseudoperoxidase activity. The sequence is that of Myoglobin (MB) from Lutra lutra (European river otter).